The primary structure comprises 297 residues: Probable DNA polymerase III subunit delta (297 aa).

Belongs to the DNA polymerase HolA subunit family. Component of the DNA clamp loading complex consisting of tau(3):delta(1):delta'(1). The DNA polymerase III holoenzyme complex contains at least 10 different subunits organized into 3 functionally essential subassemblies: the Pol III core, the beta sliding clamp processivity factor and the clamp-loading complex. The Pol III core (subunits alpha, epsilon and theta) contains the polymerase and the 3'-5' exonuclease proofreading activities. The polymerase is tethered to the template via the dimeric beta sliding clamp processivity factor. The DNA clamp-loading complex assembles the beta sliding clamp onto the primed template and plays a central role in the organization and communication at the replication fork.

The enzyme catalyses DNA(n) + a 2'-deoxyribonucleoside 5'-triphosphate = DNA(n+1) + diphosphate. In terms of biological role, part of the beta sliding clamp loading complex, which hydrolyzes ATP to load the beta clamp onto primed DNA to form the DNA replication pre-initiation complex. DNA polymerase III is a complex, multichain enzyme responsible for most of the replicative synthesis in bacteria. This DNA polymerase also exhibits 3'-5' exonuclease activity. The delta subunit is the wrench that will open the beta subunit dimer. The DNA clamp loading complex (tau(3),delta,delta') is thought to load beta dimers onto DNA by binding ATP which alters the complex's conformation so it can bind beta sliding clamp dimers and open them at one interface. Primed DNA is recognized, ATP is hydrolyzed releasing the clamp loading complex and closing the beta sliding clamp ring around the primed DNA. This Mycoplasma genitalium (strain ATCC 33530 / DSM 19775 / NCTC 10195 / G37) (Mycoplasmoides genitalium) protein is Probable DNA polymerase III subunit delta.